We begin with the raw amino-acid sequence, 417 residues long: Serine hydroxymethyltransferase (417 aa).

Lys54 carries the N6-acetyllysine modification. (6S)-5,6,7,8-tetrahydrofolate is bound by residues Leu121 and 125-127 (GHL). The residue at position 229 (Lys229) is an N6-(pyridoxal phosphate)lysine. An N6-acetyllysine mark is found at Lys250, Lys285, and Lys354. 355–357 (SPF) is a (6S)-5,6,7,8-tetrahydrofolate binding site. Lys375 carries the N6-acetyllysine modification.

It belongs to the SHMT family. In terms of assembly, homodimer. Pyridoxal 5'-phosphate serves as cofactor.

The protein localises to the cytoplasm. It catalyses the reaction (6R)-5,10-methylene-5,6,7,8-tetrahydrofolate + glycine + H2O = (6S)-5,6,7,8-tetrahydrofolate + L-serine. It functions in the pathway one-carbon metabolism; tetrahydrofolate interconversion. It participates in amino-acid biosynthesis; glycine biosynthesis; glycine from L-serine: step 1/1. Its function is as follows. Catalyzes the reversible interconversion of serine and glycine with tetrahydrofolate (THF) serving as the one-carbon carrier. This reaction serves as the major source of one-carbon groups required for the biosynthesis of purines, thymidylate, methionine, and other important biomolecules. Also exhibits THF-independent aldolase activity toward beta-hydroxyamino acids, producing glycine and aldehydes, via a retro-aldol mechanism. The sequence is that of Serine hydroxymethyltransferase from Shigella dysenteriae serotype 1 (strain Sd197).